Consider the following 124-residue polypeptide: UPF0102 protein Rcas_2007 (124 aa).

It belongs to the UPF0102 family.

This chain is UPF0102 protein Rcas_2007, found in Roseiflexus castenholzii (strain DSM 13941 / HLO8).